The primary structure comprises 363 residues: Inositol-3-phosphate synthase (363 aa).

K65 is covalently cross-linked (Isoglutamyl lysine isopeptide (Lys-Gln) (interchain with Q-Cter in protein Pup)). NAD(+)-binding residues include D70, A129, Y149, S192, D227, and K240.

The protein belongs to the myo-inositol 1-phosphate synthase family. The cofactor is NAD(+). Pupylated at Lys-65 by the prokaryotic ubiquitin-like protein Pup, which leads to its degradation by the proteasome.

It catalyses the reaction D-glucose 6-phosphate = 1D-myo-inositol 3-phosphate. Key enzyme in myo-inositol biosynthesis pathway that catalyzes the conversion of glucose 6-phosphate to 1D-myo-inositol 3-phosphate in a NAD-dependent manner. The protein is Inositol-3-phosphate synthase (ino1) of Mycolicibacterium smegmatis (strain ATCC 700084 / mc(2)155) (Mycobacterium smegmatis).